The following is a 577-amino-acid chain: Copine-8 (577 aa).

2 C2 domains span residues 19–146 (TSAT…RLEK) and 155–278 (KCGT…FNVY). Ca(2+) is bound by residues D52, D58, D112, D114, S117, K122, D124, D186, D192, D248, D250, and D256. Phosphoserine is present on S273. The VWFA domain maps to 322-523 (NFTVAIDFTA…VQFVPFRDYI (202 aa)).

Belongs to the copine family. It depends on Ca(2+) as a cofactor.

Probable calcium-dependent phospholipid-binding protein that may play a role in calcium-mediated intracellular processes. The chain is Copine-8 from Mus musculus (Mouse).